Here is a 378-residue protein sequence, read N- to C-terminus: Succinyl-diaminopimelate desuccinylase (378 aa).

A Zn(2+)-binding site is contributed by H68. D70 is a catalytic residue. D102 is a Zn(2+) binding site. Residue E136 is the Proton acceptor of the active site. Residues E137, E165, and H351 each coordinate Zn(2+).

Belongs to the peptidase M20A family. DapE subfamily. In terms of assembly, homodimer. The cofactor is Zn(2+). It depends on Co(2+) as a cofactor.

It catalyses the reaction N-succinyl-(2S,6S)-2,6-diaminopimelate + H2O = (2S,6S)-2,6-diaminopimelate + succinate. The protein operates within amino-acid biosynthesis; L-lysine biosynthesis via DAP pathway; LL-2,6-diaminopimelate from (S)-tetrahydrodipicolinate (succinylase route): step 3/3. In terms of biological role, catalyzes the hydrolysis of N-succinyl-L,L-diaminopimelic acid (SDAP), forming succinate and LL-2,6-diaminopimelate (DAP), an intermediate involved in the bacterial biosynthesis of lysine and meso-diaminopimelic acid, an essential component of bacterial cell walls. In Pseudomonas syringae pv. syringae, this protein is Succinyl-diaminopimelate desuccinylase.